A 188-amino-acid polypeptide reads, in one-letter code: MNISATILLAFGMSMDAFAASIGKGATLHKPKFSEALRTGLIFGAIETLTPLIGWSLGMLASQFILEWNHWIAFTLLVFLGGRMVIEGFRNTPDEDDAPQYRHGFWILVTTAIATSLDAMAVGVGLAFLQVNIIATALAIGCATLIMSTIGMMVGRFIGPLLGKRAEILGGIVLIGIGGQILWSHFAG.

Helical transmembrane passes span 3–23 (ISATILLAFGMSMDAFAASIG), 41–61 (LIFGAIETLTPLIGWSLGMLA), 62–82 (SQFILEWNHWIAFTLLVFLGG), 106–128 (WILVTTAIATSLDAMAVGVGLAF), 143–163 (ATLIMSTIGMMVGRFIGPLLG), and 168–188 (ILGGIVLIGIGGQILWSHFAG).

This sequence belongs to the MntP (TC 9.B.29) family.

The protein localises to the cell inner membrane. Its function is as follows. Probably functions as a manganese efflux pump. In Enterobacter sp. (strain 638), this protein is Putative manganese efflux pump MntP.